The following is a 570-amino-acid chain: Probable D-xylulose kinase A (570 aa).

Histidine 98, aspartate 279, and asparagine 280 together coordinate substrate. Residues tryptophan 363, 470-471 (GG), and asparagine 474 each bind ATP.

This sequence belongs to the FGGY kinase family.

It is found in the cytoplasm. The catalysed reaction is D-xylulose + ATP = D-xylulose 5-phosphate + ADP + H(+). Its function is as follows. Highly specific D-xylulose kinase which participates in the catabolism of xylose. Xylose is a major component of hemicelluloses such as xylan. Most fungi utilize D-xylose via three enzymatic reactions, xylose reductase (XR), xylitol dehydrogenase (XDH), and xylulokinase, to form xylulose 5-phosphate, which enters pentose phosphate pathway. The sequence is that of Probable D-xylulose kinase A (xkiA) from Arthroderma otae (strain ATCC MYA-4605 / CBS 113480) (Microsporum canis).